Here is a 165-residue protein sequence, read N- to C-terminus: Probable chemoreceptor glutamine deamidase CheD (165 aa).

The protein belongs to the CheD family.

The enzyme catalyses L-glutaminyl-[protein] + H2O = L-glutamyl-[protein] + NH4(+). Functionally, probably deamidates glutamine residues to glutamate on methyl-accepting chemotaxis receptors (MCPs), playing an important role in chemotaxis. This Geobacillus kaustophilus (strain HTA426) protein is Probable chemoreceptor glutamine deamidase CheD.